Consider the following 304-residue polypeptide: Solute carrier family 25 member 34 (304 aa).

Solcar repeat units lie at residues 4–97, 101–194, and 204–295; these read VPPA…ACQA, QQPG…AKAW, and DSWL…LRKL. 6 consecutive transmembrane segments (helical) span residues 7-27, 45-65, 98-120, 170-191, 206-226, and 278-301; these read AVDLVLGASACCLACVFTNPL, TYPRLYRGFVASVVAVVRADG, GLSQQPGGTVVAGAVAGALGAFV, VGGAVPRVMVGSAAQLATFASA, WLVALAGGMISSIAVVAVMTP, and LGPHTILSMLFWDELRKLAGWGQH.

It belongs to the mitochondrial carrier (TC 2.A.29) family.

Its subcellular location is the mitochondrion inner membrane. The enzyme catalyses a dicarboxylate(in) + sulfate(out) = a dicarboxylate(out) + sulfate(in). Its function is as follows. Putative antiporter that exchanges dicarboxylates and sulfur oxoanions across the inner membrane of mitochondria. This is Solute carrier family 25 member 34 (SLC25A34) from Bos taurus (Bovine).